We begin with the raw amino-acid sequence, 803 residues long: Ras GTPase-activating protein 4 (803 aa).

C2 domains lie at 1–105 (MAKR…SGWA) and 116–232 (VQGE…EGWF). Residues D21, D27, D74, D76, S79, D82, D149, D155, D202, D204, S207, and D210 each coordinate Ca(2+). Positions 318-546 (GLAKDFLDLL…AQLKDFITKL (229 aa)) constitute a Ras-GAP domain. The 108-residue stretch at 566–673 (PPVKEGPLFI…WLSALRKVSI (108 aa)) folds into the PH domain. Residues 675-711 (NTGLLGSYHPGVFRGDKWSCCHQKEKTGQGCDKTRSR) form a Btk-type zinc finger. Zn(2+) contacts are provided by H683, C694, C695, and C705. Residues 781-803 (EAHSSSPAGSPPSEPNCLLELQT) are disordered.

Requires Ca(2+) as cofactor. In terms of tissue distribution, widely expressed.

It is found in the cytoplasm. The protein localises to the cytosol. Its subcellular location is the cell membrane. Ca(2+)-dependent Ras GTPase-activating protein, that switches off the Ras-MAPK pathway following a stimulus that elevates intracellular calcium. Functions as an adaptor for Cdc42 and Rac1 during FcR-mediated phagocytosis. In Homo sapiens (Human), this protein is Ras GTPase-activating protein 4 (RASA4).